We begin with the raw amino-acid sequence, 252 residues long: Ribosomal RNA small subunit methyltransferase J (252 aa).

Residues 101–102, 117–118, 153–154, and aspartate 171 contribute to the S-adenosyl-L-methionine site; these read RD, ER, and SS.

This sequence belongs to the methyltransferase superfamily. RsmJ family.

Its subcellular location is the cytoplasm. The catalysed reaction is guanosine(1516) in 16S rRNA + S-adenosyl-L-methionine = N(2)-methylguanosine(1516) in 16S rRNA + S-adenosyl-L-homocysteine + H(+). Specifically methylates the guanosine in position 1516 of 16S rRNA. This Citrobacter koseri (strain ATCC BAA-895 / CDC 4225-83 / SGSC4696) protein is Ribosomal RNA small subunit methyltransferase J.